We begin with the raw amino-acid sequence, 381 residues long: DNA replication and repair protein RecF (381 aa).

30-37 contributes to the ATP binding site; that stretch reads GENAQGKT.

This sequence belongs to the RecF family.

It is found in the cytoplasm. The RecF protein is involved in DNA metabolism; it is required for DNA replication and normal SOS inducibility. RecF binds preferentially to single-stranded, linear DNA. It also seems to bind ATP. The protein is DNA replication and repair protein RecF of Lactobacillus delbrueckii subsp. bulgaricus (strain ATCC BAA-365 / Lb-18).